Consider the following 241-residue polypeptide: Geranylgeranylglyceryl phosphate synthase (241 aa).

Asp26 and Ser52 together coordinate Mg(2+). Residues 172-178 (YFEAGSG), 204-205 (GG), and 226-227 (GT) each bind sn-glycerol 1-phosphate.

This sequence belongs to the GGGP/HepGP synthase family. Group II subfamily. The cofactor is Mg(2+).

It is found in the cytoplasm. It carries out the reaction sn-glycerol 1-phosphate + (2E,6E,10E)-geranylgeranyl diphosphate = sn-3-O-(geranylgeranyl)glycerol 1-phosphate + diphosphate. Its pathway is membrane lipid metabolism; glycerophospholipid metabolism. Its function is as follows. Prenyltransferase that catalyzes the transfer of the geranylgeranyl moiety of geranylgeranyl diphosphate (GGPP) to the C3 hydroxyl of sn-glycerol-1-phosphate (G1P). This reaction is the first ether-bond-formation step in the biosynthesis of archaeal membrane lipids. The polypeptide is Geranylgeranylglyceryl phosphate synthase (Hyperthermus butylicus (strain DSM 5456 / JCM 9403 / PLM1-5)).